Here is a 928-residue protein sequence, read N- to C-terminus: Dual serine/threonine and tyrosine protein kinase (928 aa).

The span at 1–14 (MEGDGVPWGSEPES) shows a compositional bias: low complexity. 2 disordered regions span residues 1–22 (MEGD…GGGG) and 55–81 (LRGS…AGDV). Residues 394-430 (RKKENELYESLMNIANRKQEEMKDMIVETLNTMKEEL) are a coiled coil. The Protein kinase domain occupies 651–905 (PKLGQELGRG…PLLGIVQPML (255 aa)). Residues 657-665 (LGRGQYGVV) and Lys-680 each bind ATP. Catalysis depends on Asp-776, which acts as the Proton acceptor.

Belongs to the protein kinase superfamily. Ser/Thr protein kinase family.

Its subcellular location is the cytoplasm. It localises to the cell membrane. It is found in the apical cell membrane. The protein resides in the basolateral cell membrane. The protein localises to the cell junction. The enzyme catalyses L-seryl-[protein] + ATP = O-phospho-L-seryl-[protein] + ADP + H(+). The catalysed reaction is L-threonyl-[protein] + ATP = O-phospho-L-threonyl-[protein] + ADP + H(+). It catalyses the reaction L-tyrosyl-[protein] + ATP = O-phospho-L-tyrosyl-[protein] + ADP + H(+). Functionally, acts as a positive regulator of ERK phosphorylation downstream of fibroblast growth factor-receptor activation. Involved in the regulation of both caspase-dependent apoptosis and caspase-independent cell death. In the skin, it plays a predominant role in suppressing caspase-dependent apoptosis in response to UV stress in a range of dermal cell types. The sequence is that of Dual serine/threonine and tyrosine protein kinase (DSTYK) from Bos taurus (Bovine).